Consider the following 155-residue polypeptide: MSAVLTAEQALKLVGEMFVYHMPFNRALGMELERYEKEFAQLAFKNQPMMVGNWAQSILHGGVIASALDVAAGLVCVGSTLTRHETISEDELRQRLSRMGTIDLRVDYLRPGRGERFTATSSLLRAGNKVAVARVELHNEEQLYIASATATYMVG.

The protein belongs to the YigI thioesterase family.

It localises to the cytoplasm. It carries out the reaction a fatty acyl-CoA + H2O = a fatty acid + CoA + H(+). The catalysed reaction is a medium-chain fatty acyl-CoA + H2O = a medium-chain fatty acid + CoA + H(+). It catalyses the reaction a long-chain fatty acyl-CoA + H2O = a long-chain fatty acid + CoA + H(+). Functionally, displays thioesterase activity against medium- to long-chain acyl-CoA substrates. Is involved in the thioesterase-dependent beta-oxidation pathway of (9Z,11E)-octadecadienoate (conjugated linoleic acid or CLA), along with TesB and FadM. The sequence is that of Medium/long-chain acyl-CoA thioesterase YigI (yigI) from Shigella flexneri.